Consider the following 659-residue polypeptide: Cyclic-di-AMP phosphodiesterase GdpP (659 aa).

At Met-1–Pro-8 the chain is on the cytoplasmic side. A run of 2 helical transmembrane segments spans residues Leu-9–Phe-29 and Tyr-30–Ile-50. At Lys-51 to Arg-659 the chain is on the cytoplasmic side. The segment at Pro-84 to Lys-149 is PAS-like domain, required for heme-binding. Residues Glu-173–Pro-301 enclose the GGDEF domain. A DHH domain region spans residues Asn-339–Ile-496. His-345, Asp-349, Asp-351, Asp-420, His-444, and Asp-499 together coordinate Mn(2+). The segment at Phe-591–Lys-646 is DHHA1 domain.

The protein belongs to the GdpP/PdeA phosphodiesterase family. It depends on heme b as a cofactor. Mg(2+) is required as a cofactor. Requires Mn(2+) as cofactor.

The protein localises to the cell membrane. The catalysed reaction is 3',3'-c-di-AMP + H2O = 5'-O-phosphonoadenylyl-(3'-&gt;5')-adenosine + H(+). With respect to regulation, phosphodiesterase (PDE) inhibited by Zn(2+), Ca(2+) inhibits in the presence of Mg(2+) but not Mn(2+); c-di-AMP PDE activity is competitively inhibited by ppGpp. Heme binding (by Fe(2+) or Fe(3+) heme) inhibits PDE, activity is partially restored by KCN or NO only for Fe(2+) heme. Binding of NO to Fe(2+) heme switches from hexa- to pentacoordination. Heme binding inhibits the ATPase activity. Functionally, has phosphodiesterase (PDE) activity against cyclic-di-AMP (c-di-AMP) and to a much lesser extent against cyclic-di-GMP (c-di-GMP) in the DHH/DHHA1 domains. Also has ATPase activity, probably via the GGDEF domain. Overexpression leads to increased sensitivity to methyl methanesulfonate (MMS) and H(2)O(2). Overexpression leads to extreme sensitivity to the beta-lactam antibiotic cefuroxime (CEF), probably dependent on PDE activity. May monitor cellular heme or NO levels. In B.subtilis c-di-AMP is a second messenger that mediates growth, DNA repair and cell wall homeostasis; it is toxic when present in excess. The polypeptide is Cyclic-di-AMP phosphodiesterase GdpP (Bacillus subtilis (strain 168)).